The following is a 320-amino-acid chain: Zinc finger protein 330 (320 aa).

Residues M1 to R23 form a disordered region. The Nuclear localization signal signature appears at K3 to K11. Basic and acidic residues predominate over residues K10–L22. C4-type zinc fingers lie at residues C42–C58, C67–C104, C129–C149, and C175–C189. Residues E206–N320 form a disordered region. Residues C216–D225 are compositionally biased toward basic and acidic residues. Acidic residues predominate over residues D269 to D285. S291 is modified (phosphoserine).

The protein belongs to the NOA36 family. As to expression, widely expressed. Higher expression seen in heart and skeletal muscle.

Its subcellular location is the nucleus. The protein localises to the nucleolus. It is found in the chromosome. The protein resides in the centromere. This chain is Zinc finger protein 330 (ZNF330), found in Homo sapiens (Human).